A 460-amino-acid polypeptide reads, in one-letter code: CUGBP Elav-like family member 6 (460 aa).

Positions 1 to 10 are enriched in low complexity; that stretch reads MAAAPGGSAP. Residues 1 to 37 form a disordered region; that stretch reads MAAAPGGSAPPAGPSPRLAFSTADSGGGMSGLNPGPA. 2 consecutive RRM domains span residues 46–127 and 134–214; these read IKLF…PAAS and RKLF…LADT. Residues 316–336 form a disordered region; it reads NGFGSLTPQSNGQPGSDTLYN. Residues 319–336 are compositionally biased toward polar residues; it reads GSLTPQSNGQPGSDTLYN. Residues 375–453 form the RRM 3 domain; sequence CNLFIYHLPQ…KRLKVQLKRP (79 aa).

It belongs to the CELF/BRUNOL family.

Its subcellular location is the nucleus. It is found in the cytoplasm. Functionally, RNA-binding protein implicated in the regulation of pre-mRNA alternative splicing. Mediates exon inclusion and/or exclusion in pre-mRNA that are subject to tissue-specific and developmentally regulated alternative splicing. Specifically activates exon 5 inclusion of TNNT2 in a muscle-specific splicing enhancer (MSE)-dependent manner. Promotes also exon exclusion of INSR pre-mRNA. In Mus musculus (Mouse), this protein is CUGBP Elav-like family member 6 (Celf6).